A 125-amino-acid polypeptide reads, in one-letter code: Monothiol glutaredoxin-S2 (125 aa).

The 97-residue stretch at 28–124 (AERVGRLVRE…PRLREVGALC (97 aa)) folds into the Glutaredoxin domain. Cys48 is a binding site for [2Fe-2S] cluster.

Belongs to the glutaredoxin family. CC-type subfamily.

It is found in the cytoplasm. May only reduce GSH-thiol disulfides, but not protein disulfides. The polypeptide is Monothiol glutaredoxin-S2 (GRXS2) (Oryza sativa subsp. japonica (Rice)).